We begin with the raw amino-acid sequence, 201 residues long: Small ribosomal subunit protein uS5 (201 aa).

A disordered region spans residues 1 to 27; it reads MAGPQRRGSGAGGGERRDRKGRDGGAA. Over residues 14-23 the composition is skewed to basic and acidic residues; that stretch reads GERRDRKGRD. In terms of domain architecture, S5 DRBM spans 34–97; sequence YVERVVAINR…EEAKKHFFKV (64 aa).

This sequence belongs to the universal ribosomal protein uS5 family. In terms of assembly, part of the 30S ribosomal subunit. Contacts proteins S4 and S8.

With S4 and S12 plays an important role in translational accuracy. In terms of biological role, located at the back of the 30S subunit body where it stabilizes the conformation of the head with respect to the body. This is Small ribosomal subunit protein uS5 from Streptomyces avermitilis (strain ATCC 31267 / DSM 46492 / JCM 5070 / NBRC 14893 / NCIMB 12804 / NRRL 8165 / MA-4680).